A 197-amino-acid chain; its full sequence is Auxin-responsive protein IAA31 (197 aa).

Disordered regions lie at residues 1–43 (MENL…DQAK) and 66–90 (SCLQ…ETQQ). The short motif at 9-13 (LRLGL) is the EAR-like (transcriptional repression) element. One can recognise a PB1 domain in the interval 99–186 (GLFVKVSMDG…TCKRLRIMKG (88 aa)).

Belongs to the Aux/IAA family. Homodimers and heterodimers. In terms of tissue distribution, highly expressed in etiolated seedlings. Expressed in roots.

The protein localises to the nucleus. Aux/IAA proteins are short-lived transcriptional factors that function as repressors of early auxin response genes at low auxin concentrations. This Oryza sativa subsp. japonica (Rice) protein is Auxin-responsive protein IAA31 (IAA31).